Reading from the N-terminus, the 493-residue chain is 3-octaprenyl-4-hydroxybenzoate carboxy-lyase (493 aa).

N172 contributes to the Mn(2+) binding site. Prenylated FMN-binding positions include 175-177 (IYR), 189-191 (RWL), and 194-195 (RG). A Mn(2+)-binding site is contributed by E238. D287 functions as the Proton donor in the catalytic mechanism.

This sequence belongs to the UbiD family. Homohexamer. Requires prenylated FMN as cofactor. The cofactor is Mn(2+).

The protein resides in the cell membrane. It catalyses the reaction a 4-hydroxy-3-(all-trans-polyprenyl)benzoate + H(+) = a 2-(all-trans-polyprenyl)phenol + CO2. The protein operates within cofactor biosynthesis; ubiquinone biosynthesis. Catalyzes the decarboxylation of 3-octaprenyl-4-hydroxy benzoate to 2-octaprenylphenol, an intermediate step in ubiquinone biosynthesis. In Shewanella sp. (strain ANA-3), this protein is 3-octaprenyl-4-hydroxybenzoate carboxy-lyase.